The chain runs to 448 residues: N-succinylarginine dihydrolase (448 aa).

Residues 19–28 (AGLSSGNIAS), N110, and 137–138 (HR) contribute to the substrate site. E174 is a catalytic residue. R216 is a binding site for substrate. The active site involves H252. 2 residues coordinate substrate: D254 and N366. C372 functions as the Nucleophile in the catalytic mechanism.

It belongs to the succinylarginine dihydrolase family. Homodimer.

It catalyses the reaction N(2)-succinyl-L-arginine + 2 H2O + 2 H(+) = N(2)-succinyl-L-ornithine + 2 NH4(+) + CO2. The protein operates within amino-acid degradation; L-arginine degradation via AST pathway; L-glutamate and succinate from L-arginine: step 2/5. Its function is as follows. Catalyzes the hydrolysis of N(2)-succinylarginine into N(2)-succinylornithine, ammonia and CO(2). This is N-succinylarginine dihydrolase from Legionella pneumophila (strain Paris).